The chain runs to 434 residues: Zinc finger and BTB domain-containing protein 8A (434 aa).

Positions 24-92 constitute a BTB domain; it reads CDCSILVEGK…VYSGKLSLTG (69 aa). Residues 134–238 form a disordered region; that stretch reads SLSDKDTGSN…SGNHVSQSEE (105 aa). Residues serine 161 and serine 167 each carry the phosphoserine modification. Glycyl lysine isopeptide (Lys-Gly) (interchain with G-Cter in SUMO2) cross-links involve residues lysine 172, lysine 176, and lysine 193. Positions 192–202 are enriched in basic and acidic residues; sequence AKHEQRKEPSK. Residues 226–238 are compositionally biased toward polar residues; sequence QTDSGNHVSQSEE. 2 consecutive C2H2-type zinc fingers follow at residues 275 to 297 and 303 to 326; these read FKCP…LRCH and YPCQ…RTIH. Residue lysine 430 forms a Glycyl lysine isopeptide (Lys-Gly) (interchain with G-Cter in SUMO2) linkage.

It localises to the nucleus. Its function is as follows. May be involved in transcriptional regulation. The polypeptide is Zinc finger and BTB domain-containing protein 8A (Zbtb8a) (Mus musculus (Mouse)).